Reading from the N-terminus, the 314-residue chain is MNSLWMGNLEPYMDEDFICRAFAQMGETVVKIRLIRDKITGKNAGYGFVELADDTAVERCLRKVNGKPLPGATPPKRFKLSRSNYGKQGESSTFSLFVSDLTPDVDDGMLYEFFHYHFSSCCSGKIVLDANGHSKCCGFVSFESEREQKRALVDLQGATGLGKKALRLSLASSRVNKKKESSENQIWQYHSDSKNASFINQYYYPQNLSYLSTYDWNYSLDYLNPSQNTTPVDVTQSEQTEDDDLEYPDSEINVTEANETFMAQSEELYSALIGCFFQPPESWDGVTCSASSYLPEPINQYEMEDSCSSNWVTT.

RRM domains are found at residues 2–85 (NSLW…RSNY) and 94–173 (FSLF…LASS).

The protein belongs to the RRM TRSPAP family.

Its subcellular location is the nucleus. The protein localises to the cytoplasm. Its function is as follows. Involved in the early steps of selenocysteine biosynthesis and tRNA(Sec) charging to the later steps resulting in the cotranslational incorporation of selenocysteine into selenoproteins. The polypeptide is tRNA selenocysteine 1-associated protein 1 (Danio rerio (Zebrafish)).